A 362-amino-acid polypeptide reads, in one-letter code: HLA class I histocompatibility antigen, B alpha chain (362 aa).

The first 24 residues, 1–24, serve as a signal peptide directing secretion; sequence MLVMAPRTVLLLLSAALALTETWA. The VL9 epitope stretch occupies residues 3–11; it reads VMAPRTVLL. Positions 25–114 are alpha-1; the sequence is GSHSMRYFYT…LRGYYNQSEA (90 aa). Over 25–309 the chain is Extracellular; that stretch reads GSHSMRYFYT…PSSQSTVPIV (285 aa). Asparagine 87 lines the a peptide antigen pocket. The short motif at 101–107 is the Bw6 motif element; sequence SLRNLRG. Position 108 (tyrosine 108) interacts with a peptide antigen. N-linked (GlcNAc...) asparagine glycosylation is present at asparagine 110. Residues 115-206 form an alpha-2 region; the sequence is GSHTLQSMYG…ENGKDKLERA (92 aa). A disulfide bridge connects residues cysteine 125 and cysteine 188. Residues threonine 167, lysine 170, glutamate 176, tyrosine 183, and tyrosine 195 each contribute to the a peptide antigen site. An alpha-3 region spans residues 207-298; it reads DPPKTHVTHH…GLPKPLTLRW (92 aa). The Ig-like C1-type domain maps to 209–295; it reads PKTHVTHHPI…QHEGLPKPLT (87 aa). Cysteine 227 and cysteine 283 form a disulfide bridge. The segment at 299–309 is connecting peptide; sequence EPSSQSTVPIV. A helical membrane pass occupies residues 310 to 333; sequence GIVAGLAVLAVVVIGAVVAAVMCR. Over 334–362 the chain is Cytoplasmic; it reads RKSSGGKGGSYSQAACSDSAQGSDVSLTA. Positions 337–362 are disordered; the sequence is SGGKGGSYSQAACSDSAQGSDVSLTA. Residues 346–362 show a composition bias toward polar residues; it reads QAACSDSAQGSDVSLTA.

As to quaternary structure, heterotrimer that consists of an alpha chain HLA-B, a beta chain B2M and a peptide (peptide-HLA-B-B2M). Early in biogenesis, HLA-B-B2M dimer interacts with the components of the peptide-loading complex composed of TAPBP, TAP1-TAP2, TAPBPL, PDIA3/ERP57 and CALR. Interacts with TAP1-TAP2 transporter via TAPBP; this interaction is obligatory for the loading of peptide epitopes delivered to the ER by TAP1-TAP2 transporter. Interacts with TAPBPL; TAPBPL binds peptide-free HLA-B-B2M complexes or those loaded with low affinity peptides, likely facilitating peptide exchange for higher affinity peptides. Only optimally assembled peptide-HLA-B-B2M trimer translocates to the surface of antigen-presenting cells, where it interacts with TCR and CD8 coreceptor on the surface of T cells. HLA-B (via polymorphic alpha-1 and alpha-2 domains) interacts with antigen-specific TCR (via CDR1, CDR2 and CDR3 domains). One HLA-B molecule (mainly via nonpolymorphic alpha-3 domain) interacts with one CD8A homodimer (via CDR-like loop); this interaction ensures peptide-HLA-B-B2M recognition by CD8-positive T cells only. Allele B*57:01 interacts (via Bw4 motif) with KIR3DL1 (via Ig-like C2-type domain); this interaction may interfere with peptide binding. Allele B*46:01 interacts with KIR2DL3. In terms of assembly, (Microbial infection) Interacts with HTLV-1 accessory protein p12I.

The protein localises to the cell membrane. It is found in the endoplasmic reticulum membrane. Its function is as follows. Antigen-presenting major histocompatibility complex class I (MHCI) molecule. In complex with B2M/beta 2 microglobulin displays primarily viral and tumor-derived peptides on antigen-presenting cells for recognition by alpha-beta T cell receptor (TCR) on HLA-B-restricted CD8-positive T cells, guiding antigen-specific T cell immune response to eliminate infected or transformed cells. May also present self-peptides derived from the signal sequence of secreted or membrane proteins, although T cells specific for these peptides are usually inactivated to prevent autoreactivity. Both the peptide and the MHC molecule are recognized by TCR, the peptide is responsible for the fine specificity of antigen recognition and MHC residues account for the MHC restriction of T cells. Typically presents intracellular peptide antigens of 8 to 13 amino acids that arise from cytosolic proteolysis via constitutive proteasome and IFNG-induced immunoproteasome. Can bind different peptides containing allele-specific binding motifs, which are mainly defined by anchor residues at position 2 and 9. In terms of biological role, allele B*07:02: Displays peptides sharing a common signature motif, namely a Pro residue at position 2 and mainly a Leu anchor residue at the C-terminus. Presents a long peptide (APRGPHGGAASGL) derived from the cancer-testis antigen CTAG1A/NY-ESO-1, eliciting a polyclonal CD8-positive T cell response against tumor cells. Presents viral epitopes derived from HIV-1 gag-pol (TPQDLNTML) and Nef (RPQVPLRPM). Presents an immunodominant epitope derived from SARS-CoV-2 N/nucleoprotein (SPRWYFYYL). Displays self-peptides including a peptide derived from the signal sequence of HLA-DPB1 (APRTVALTA). Allele B*08:01: Presents to CD8-positive T cells viral epitopes derived from EBV/HHV-4 EBNA3 (QAKWRLQTL), eliciting cytotoxic T cell response. Functionally, allele B*13:02: Presents multiple HIV-1 epitopes derived from gag (RQANFLGKI, GQMREPRGSDI), nef (RQDILDLWI), gag-pol (RQYDQILIE, GQGQWTYQI) and rev (LQLPPLERL), all having in common a Gln residue at position 2 and mainly hydrophobic amino acids Leu, Ile or Val at the C-terminus. Associated with successful control of HIV-1 infection. Its function is as follows. Allele B*18:01: Preferentially presents octomeric and nonameric peptides sharing a common motif, namely a Glu at position 2 and Phe or Tyr anchor residues at the C-terminus. Presents an EBV/HHV-4 epitope derived from BZLF1 (SELEIKRY). May present to CD8-positive T cells an antigenic peptide derived from MAGEA3 (MEVDPIGHLY), triggering an anti-tumor immune response. May display a broad repertoire of self-peptides with a preference for peptides derived from RNA-binding proteins. In terms of biological role, allele B*27:05: Presents to CD8-positive T cells immunodominant viral epitopes derived from HCV POLG (ARMILMTHF), HIV-1 gag (KRWIILGLNK), IAV NP (SRYWAIRTR), SARS-CoV-2 N/nucleoprotein (QRNAPRITF), EBV/HHV-4 EBNA4 (HRCQAIRKK) and EBV/HHV-4 EBNA6 (RRIYDLIEL), conferring longterm protection against viral infection. Can present self-peptides derived from cytosolic and nuclear proteins. All peptides carry an Arg at position 2. The peptide-bound form interacts with NK cell inhibitory receptor KIR3DL1 and inhibits NK cell activation in a peptide-specific way, being particularly sensitive to the nature of the amino acid side chain at position 8 of the antigenic peptide. KIR3DL1 fails to recognize HLA-B*27:05 in complex with B2M and EBV/HHV-4 EBNA6 (RRIYDLIEL) peptide, which can lead to increased activation of NK cells during infection. May present an altered repertoire of peptides in the absence of TAP1-TAP2 and TAPBPL. Allele B*40:01: Presents immunodominant viral epitopes derived from EBV/HHV-4 LMP2 (IEDPPFNSL) and SARS-CoV-2 N/nucleoprotein (MEVTPSGTWL), triggering memory CD8-positive T cell response. Displays self-peptides sharing a signature motif, namely a Glu at position 2 and a Leu anchor residue at the C-terminus. Functionally, allele B*41:01: Displays self-peptides sharing a signature motif, namely a Glu at position 2 and Ala or Pro anchor residues at the C-terminus. Its function is as follows. Allele B*44:02: Presents immunodominant viral epitopes derived from EBV/HHV-4 EBNA4 (VEITPYKPTW) and EBNA6 (AEGGVGWRHW, EENLLDFVRF), triggering memory CD8-positive T cell response. Displays self-peptides sharing a signature motif, namely a Glu at position 2 and Phe, Tyr or Trp anchor residues at the C-terminus. In terms of biological role, allele B*45:01: Displays self-peptides sharing a signature motif, namely a Glu at position 2 and Ala or Pro anchor residues at the C-terminus. Allele B*46:01: Preferentially presents nonameric peptides sharing a signature motif, namely Ala and Leu at position 2 and Tyr, Phe, Leu, or Met anchor residues at the C-terminus. The peptide-bound form interacts with KIR2DL3 and inhibits NK cell cytotoxic response in a peptide-specific way. Functionally, allele B*47:01: Displays self-peptides sharing a signature motif, namely an Asp at position 2 and Leu or Met anchor residues at the C-terminus. Its function is as follows. Allele B*49:01: Displays self-peptides sharing a signature motif, namely a Glu at position 2 and Ile or Val anchor residues at the C-terminus. In terms of biological role, allele B*50:01: Displays self-peptides sharing a signature motif, namely a Glu at position 2 and Ala or Pro anchor residues at the C-terminus. Allele B*51:01: Presents an octomeric HIV-1 epitope derived from gag-pol (TAFTIPSI) to the public TRAV17/TRBV7-3 TCR clonotype, strongly suppressing HIV-1 replication. Functionally, allele B*54:01: Displays peptides sharing a common signature motif, namely a Pro residue at position 2 and Ala anchor residue at the C-terminus. Its function is as follows. Allele B*55:01: Displays peptides sharing a common signature motif, namely a Pro residue at position 2 and Ala anchor residue at the C-terminus. In terms of biological role, allele B*56:01: Displays peptides sharing a common signature motif, namely a Pro residue at position 2 and Ala anchor residue at the C-terminus. Allele B*57:01: The peptide-bound form recognizes KIR3DL1 and inhibits NK cell cytotoxic response. Presents HIV gag peptides (immunodominant KAFSPEVIPMF and subdominant KALGPAATL epitopes) predominantly to CD8-positive T cell clones expressing a TRAV41-containing TCR, triggering HLA-B-restricted T cell responses. Functionally, allele B*67:01: Displays peptides sharing a common signature motif, namely a Pro residue at position 2 and Leu anchor residue at the C-terminus. The protein is HLA class I histocompatibility antigen, B alpha chain of Homo sapiens (Human).